Here is a 176-residue protein sequence, read N- to C-terminus: Large ribosomal subunit protein eL20 (176 aa).

The protein belongs to the eukaryotic ribosomal protein eL20 family. Component of the large ribosomal subunit.

It localises to the cytoplasm. Functionally, component of the large ribosomal subunit. The ribosome is a large ribonucleoprotein complex responsible for the synthesis of proteins in the cell. The sequence is that of Large ribosomal subunit protein eL20 (rpl18a) from Ictalurus punctatus (Channel catfish).